The chain runs to 486 residues: NADH-quinone oxidoreductase subunit N (486 aa).

Transmembrane regions (helical) follow at residues 8–28 (LIAL…ILSI), 36–56 (FIAF…YFLI), 74–94 (ILYI…AYPW), 104–124 (EFYL…ISNH), 125–145 (MASL…LIAY), 160–180 (LVLS…IYAI), 204–224 (VLFG…MVPF), 239–259 (VLSF…LYFF), 270–290 (IFLI…LMAI), 298–318 (FFGY…LVSK), 329–349 (GIFL…INLF), 374–394 (ASIV…LGFF), 407–427 (HLWT…YGYL), and 459–479 (ILIF…NPLI).

It belongs to the complex I subunit 2 family. As to quaternary structure, NDH-1 is composed of 13 different subunits. Subunits NuoA, H, J, K, L, M, N constitute the membrane sector of the complex.

The protein localises to the cell membrane. It catalyses the reaction a quinone + NADH + 5 H(+)(in) = a quinol + NAD(+) + 4 H(+)(out). NDH-1 shuttles electrons from NADH, via FMN and iron-sulfur (Fe-S) centers, to quinones in the respiratory chain. The immediate electron acceptor for the enzyme in this species is believed to be ubiquinone. Couples the redox reaction to proton translocation (for every two electrons transferred, four hydrogen ions are translocated across the cytoplasmic membrane), and thus conserves the redox energy in a proton gradient. This is NADH-quinone oxidoreductase subunit N from Buchnera aphidicola subsp. Schizaphis graminum (strain Sg).